Here is a 319-residue protein sequence, read N- to C-terminus: Lipoyl synthase (319 aa).

The span at 1–12 shows a compositional bias: polar residues; that stretch reads MVTIVDTLSNTP. The segment at 1–32 is disordered; it reads MVTIVDTLSNTPLRPRHPEKANRPDSISPAKP. The [4Fe-4S] cluster site is built by Cys-61, Cys-66, Cys-72, Cys-87, Cys-91, Cys-94, and Ser-300. The region spanning 73 to 289 is the Radical SAM core domain; that stretch reads WDKKHATFMI…ETVAYTKGFL (217 aa).

It belongs to the radical SAM superfamily. Lipoyl synthase family. [4Fe-4S] cluster serves as cofactor.

The protein localises to the cytoplasm. It catalyses the reaction [[Fe-S] cluster scaffold protein carrying a second [4Fe-4S](2+) cluster] + N(6)-octanoyl-L-lysyl-[protein] + 2 oxidized [2Fe-2S]-[ferredoxin] + 2 S-adenosyl-L-methionine + 4 H(+) = [[Fe-S] cluster scaffold protein] + N(6)-[(R)-dihydrolipoyl]-L-lysyl-[protein] + 4 Fe(3+) + 2 hydrogen sulfide + 2 5'-deoxyadenosine + 2 L-methionine + 2 reduced [2Fe-2S]-[ferredoxin]. It functions in the pathway protein modification; protein lipoylation via endogenous pathway; protein N(6)-(lipoyl)lysine from octanoyl-[acyl-carrier-protein]: step 2/2. Catalyzes the radical-mediated insertion of two sulfur atoms into the C-6 and C-8 positions of the octanoyl moiety bound to the lipoyl domains of lipoate-dependent enzymes, thereby converting the octanoylated domains into lipoylated derivatives. This chain is Lipoyl synthase, found in Bradyrhizobium sp. (strain BTAi1 / ATCC BAA-1182).